Reading from the N-terminus, the 223-residue chain is Pyridoxine/pyridoxamine 5'-phosphate oxidase (223 aa).

Substrate is bound by residues 8–11 and K65; that span reads RVDY. Residues 60–65, 75–76, R81, K82, and Q104 each bind FMN; these read RTVLLK and YT. Substrate contacts are provided by Y122, R126, and S130. Residues 139–140 and W188 each bind FMN; that span reads QS. 194–196 is a binding site for substrate; it reads RLH. FMN is bound at residue R198.

Belongs to the pyridoxamine 5'-phosphate oxidase family. Homodimer. FMN is required as a cofactor.

The enzyme catalyses pyridoxamine 5'-phosphate + O2 + H2O = pyridoxal 5'-phosphate + H2O2 + NH4(+). It carries out the reaction pyridoxine 5'-phosphate + O2 = pyridoxal 5'-phosphate + H2O2. The protein operates within cofactor metabolism; pyridoxal 5'-phosphate salvage; pyridoxal 5'-phosphate from pyridoxamine 5'-phosphate: step 1/1. It participates in cofactor metabolism; pyridoxal 5'-phosphate salvage; pyridoxal 5'-phosphate from pyridoxine 5'-phosphate: step 1/1. Its function is as follows. Catalyzes the oxidation of either pyridoxine 5'-phosphate (PNP) or pyridoxamine 5'-phosphate (PMP) into pyridoxal 5'-phosphate (PLP). The sequence is that of Pyridoxine/pyridoxamine 5'-phosphate oxidase from Kineococcus radiotolerans (strain ATCC BAA-149 / DSM 14245 / SRS30216).